A 251-amino-acid polypeptide reads, in one-letter code: MRKVIIKENPSEEEIKELLDLAEKHGGVVTIFARCKVHYEGRAKSELGEGDRIIIIKPDGSFLIHQNKKREPVNWQPPGSKVTFKENSIISIRRRPYERLEVEIIEPYSLVVFLAEDYEELALTGSEAEMANLIFENPRVIEEGFKPIYREKPIRHGIVDVMGVDKDGNIVVLELKRRKADLHAVSQLKRYVDSLKEEYGENVRGILVAPSLTEGAKKLLEKEGLEFRKLEPPKKGNEKRSKQKTLDFFTP.

Basic and acidic residues predominate over residues 230–240; sequence LEPPKKGNEKR. The interval 230–251 is disordered; that stretch reads LEPPKKGNEKRSKQKTLDFFTP.

It belongs to the NucS endonuclease family. As to quaternary structure, homodimer. Interacts with PCNA.

The protein localises to the cytoplasm. Activity is modulated by PCNA. PCNA increases the binding affinity of NucS towards ssDNA as well as branched DNA substrates carrying either 3' or 5' flaps. PCNA is also required for optimal loading of NucS on its substrates and to direct activity towards ss/dsDNA junction. In terms of biological role, cleaves both 3' and 5' ssDNA extremities of branched DNA structures. Binds to ssDNA. The chain is Endonuclease NucS from Pyrococcus abyssi (strain GE5 / Orsay).